The sequence spans 797 residues: MKRTSNRNEEATAKLSSSTTITTTTTNKYYNMANAEKSSKSTTISNLIPKYSLFNEPNNDNDTNSSTRPNKQQKLLKSNESTTSTTTTTTPITTTTTTTTTTTTPNLSKYYNYNLYIEKQNEKQNLPTTETETTTITPTLTTTTTTTTTTTTTTTKQIQNTTTSTINHFLPLIIQKEIIFLLVELGSFLNARKVCKYWKKVCNGCVENLNIYFTDIHLSASVKHVSEVFVKSLNSDYFHLQSVSFINGAKNSISYSEFYFNNVILPFIENVVRYNQTIENFTIKGFPITRINNKSSQQLLPSYKLYHSTSVPSSPPPPPPPPPPQIQQPTITAPTSTTAIAVSSTTTTATGQTLNNNNNNNNIPKGLNYYLTNNFKLKKINLKNIGLDSRDKFDFFSSLSSSVNNTLETLIICDNIGDEGMQLLSVILIKNLLKVLKRLELQKNQFTNQSAYYLNKVLSCEQLQLETLNLSSNRIDEQGLIMMKDGFGRNKSLKEFIFSKNRLGNTDSVDFGKSITSLDLHDSMVGSKQSIKGLSQYLKFNESITSLNLSFNHIGSNEAIKSLSKSFAVNQTLKFVDLSFNKINSNFGLDHLVSSLLINHSIHSISLQSNQIDNTSAITLSQLFNSSRQLFSPFKYLNLSGNKIGIGGLKKLINDLSKYSKTHIIYNNNDDNNNNKNENENKSKIKNLSFNNNNNNFVKIIKNYHDTIPIIRTINNSNGKNLLEEEVEQVINSSSNDTNQNDNINNENNLTEISIDLSSNSPLEVSKVIGLIPRYKSKLTFADRKPVKKYKLVKLLF.

Over residues 1–12 the composition is skewed to basic and acidic residues; the sequence is MKRTSNRNEEAT. Disordered regions lie at residues 1-20, 51-103, 125-148, and 307-333; these read MKRT…SSTT, YSLF…TTTT, NLPT…TTTT, and HSTS…TITA. Positions 55-81 are enriched in polar residues; it reads NEPNNDNDTNSSTRPNKQQKLLKSNES. The segment covering 82–103 has biased composition (low complexity); that stretch reads TTSTTTTTTPITTTTTTTTTTT. Positions 313 to 326 are enriched in pro residues; the sequence is SSPPPPPPPPPPQI. LRR repeat units lie at residues 376–397, 406–425, 435–456, 464–484, 492–513, 514–535, 543–564, 572–593, 601–622, and 633–653; these read KLKK…DFFS, TLET…QLLS, VLKR…YLNK, QLET…IMMK, SLKE…DFGK, SITS…KGLS, SITS…KSLS, TLKF…DHLV, SIHS…TLSQ, and PFKY…KKLI.

The polypeptide is Leucine-rich repeat-containing protein AAC1 (AAC1) (Dictyostelium discoideum (Social amoeba)).